A 356-amino-acid polypeptide reads, in one-letter code: Biotin synthase (356 aa).

One can recognise a Radical SAM core domain in the interval 51 to 270; sequence NKVQCNQLLN…IALARIMMPL (220 aa). [4Fe-4S] cluster-binding residues include Cys66, Cys70, and Cys73. [2Fe-2S] cluster-binding residues include Cys110, Cys141, Cys201, and Arg274. Residues 310–356 form a disordered region; that stretch reads PGDNKDRSLFDRLGLEPRDDHGVHEHSSHSHTHDQGHDHGPHGHSHG. The segment covering 312 to 350 has biased composition (basic and acidic residues); that stretch reads DNKDRSLFDRLGLEPRDDHGVHEHSSHSHTHDQGHDHGP.

It belongs to the radical SAM superfamily. Biotin synthase family. Homodimer. [4Fe-4S] cluster is required as a cofactor. [2Fe-2S] cluster serves as cofactor.

It carries out the reaction (4R,5S)-dethiobiotin + (sulfur carrier)-SH + 2 reduced [2Fe-2S]-[ferredoxin] + 2 S-adenosyl-L-methionine = (sulfur carrier)-H + biotin + 2 5'-deoxyadenosine + 2 L-methionine + 2 oxidized [2Fe-2S]-[ferredoxin]. It participates in cofactor biosynthesis; biotin biosynthesis; biotin from 7,8-diaminononanoate: step 2/2. In terms of biological role, catalyzes the conversion of dethiobiotin (DTB) to biotin by the insertion of a sulfur atom into dethiobiotin via a radical-based mechanism. In Rhodopseudomonas palustris (strain BisB18), this protein is Biotin synthase.